The following is a 231-amino-acid chain: 5'-methylthioadenosine/S-adenosylhomocysteine nucleosidase (231 aa).

The active-site Proton acceptor is Glu13. Substrate-binding positions include Gly79, Met154, and 175–176; that span reads ME. Asp199 (proton donor) is an active-site residue.

Belongs to the PNP/UDP phosphorylase family. MtnN subfamily.

It catalyses the reaction S-adenosyl-L-homocysteine + H2O = S-(5-deoxy-D-ribos-5-yl)-L-homocysteine + adenine. The enzyme catalyses S-methyl-5'-thioadenosine + H2O = 5-(methylsulfanyl)-D-ribose + adenine. The catalysed reaction is 5'-deoxyadenosine + H2O = 5-deoxy-D-ribose + adenine. Its pathway is amino-acid biosynthesis; L-methionine biosynthesis via salvage pathway; S-methyl-5-thio-alpha-D-ribose 1-phosphate from S-methyl-5'-thioadenosine (hydrolase route): step 1/2. Catalyzes the irreversible cleavage of the glycosidic bond in both 5'-methylthioadenosine (MTA) and S-adenosylhomocysteine (SAH/AdoHcy) to adenine and the corresponding thioribose, 5'-methylthioribose and S-ribosylhomocysteine, respectively. Also cleaves 5'-deoxyadenosine, a toxic by-product of radical S-adenosylmethionine (SAM) enzymes, into 5-deoxyribose and adenine. This Marinomonas sp. (strain MWYL1) protein is 5'-methylthioadenosine/S-adenosylhomocysteine nucleosidase.